The sequence spans 596 residues: Deuterosome assembly protein 1 (596 aa).

Coiled coils occupy residues 8–68 (IARN…NHEI), 130–180 (CELQ…FQKE), and 227–284 (IENL…DLLR). The span at 297 to 306 (TANLANQKTA) shows a compositional bias: polar residues. Residues 297 to 316 (TANLANQKTAQGEEASFQVT) form a disordered region. The stretch at 337 to 402 (SEKYQAENDL…LKGAQNRQTS (66 aa)) forms a coiled coil. The interval 447 to 467 (DKPQKHRSFHGENNSLKPTNY) is disordered. The span at 457–467 (GENNSLKPTNY) shows a compositional bias: polar residues.

This sequence belongs to the CEP63 family.

The protein resides in the cytoplasm. Key structural component of the deuterosome, a structure that promotes de novo centriole amplification in multiciliated cells. Deuterosome-mediated centriole amplification occurs in terminally differentiated multiciliated cells and can generate more than 100 centrioles. Probably sufficient for the specification and formation of the deuterosome inner core. In Xenopus tropicalis (Western clawed frog), this protein is Deuterosome assembly protein 1.